The chain runs to 679 residues: MANSQRKILVTSALPYANGPIHLGHMLEYIQTDIWSRFQKLRGHECHYICADDAHGTPIMLKAQQLGMTPEDMIAQVQKEHEKDFADFNIQFDNFHSTHSDENRELASEIYIKLRDAGYIKTKTISQLFDPEKSMFLPDRFVKGTCPRCKSEDQYGDNCDNCGATYSTTDLIDPKSAVSGATPVMKDTEHFFFDLPSFEGMLKEWINSGSLQQEMANKLGEWFEQGLQQWDISRDAPYFGFEIPDAPGKFFYVWLDAPIGYMGSFKNLCNKRDDLNFDDFWSKDSTAEVYHFIGKDIVYFHSLFWPAMLEGAGLRKPTSVYAHGYVTVNGAKMSKSKGTFIKARTYLDNLDPEYLRYYYAAKLSSRIDDLDLNLEDFAQRVNSDLVGKLVNLASRTAGFISKRFDGKLAKIADTSLTESFLAKQETIANFYETREFGKAMREVMTLADIANAYVADSAPWQLIKDDAKQEEAHQVCTNALNLFRILVTYLKPVLPKLAQDVEAFLQMELTWDNLDVDLAGHEIAKFKALMQRVEMKSIEAIIEASKENLQVTAEPEVKKQDKTPLEQDPISEEISFEDFAKIDLRIARIAKAEHVKEANKLLRLELDLGGETKQVFAGIKSAYAPEDLEGKLTVMVANLAPRQMRFGVSEGMVLAAGPGGKDLWIMEPHEGAQPGMKVK.

The 'HIGH' region signature appears at Pro15–His25. Residues Cys146, Cys149, Cys159, and Cys162 each contribute to the Zn(2+) site. The 'KMSKS' region signature appears at Lys332–Ser336. Lys335 contributes to the ATP binding site. Residues Asp578 to Lys679 enclose the tRNA-binding domain.

It belongs to the class-I aminoacyl-tRNA synthetase family. MetG type 1 subfamily. Homodimer. The cofactor is Zn(2+).

It localises to the cytoplasm. The enzyme catalyses tRNA(Met) + L-methionine + ATP = L-methionyl-tRNA(Met) + AMP + diphosphate. Its function is as follows. Is required not only for elongation of protein synthesis but also for the initiation of all mRNA translation through initiator tRNA(fMet) aminoacylation. This is Methionine--tRNA ligase from Shewanella pealeana (strain ATCC 700345 / ANG-SQ1).